The chain runs to 104 residues: Pyrimidine/purine nucleoside phosphorylase (104 aa).

Belongs to the nucleoside phosphorylase PpnP family.

The catalysed reaction is a purine D-ribonucleoside + phosphate = a purine nucleobase + alpha-D-ribose 1-phosphate. The enzyme catalyses adenosine + phosphate = alpha-D-ribose 1-phosphate + adenine. It carries out the reaction cytidine + phosphate = cytosine + alpha-D-ribose 1-phosphate. It catalyses the reaction guanosine + phosphate = alpha-D-ribose 1-phosphate + guanine. The catalysed reaction is inosine + phosphate = alpha-D-ribose 1-phosphate + hypoxanthine. The enzyme catalyses thymidine + phosphate = 2-deoxy-alpha-D-ribose 1-phosphate + thymine. It carries out the reaction uridine + phosphate = alpha-D-ribose 1-phosphate + uracil. It catalyses the reaction xanthosine + phosphate = alpha-D-ribose 1-phosphate + xanthine. Catalyzes the phosphorolysis of diverse nucleosides, yielding D-ribose 1-phosphate and the respective free bases. Can use uridine, adenosine, guanosine, cytidine, thymidine, inosine and xanthosine as substrates. Also catalyzes the reverse reactions. The polypeptide is Pyrimidine/purine nucleoside phosphorylase (Hydrogenovibrio crunogenus (strain DSM 25203 / XCL-2) (Thiomicrospira crunogena)).